Reading from the N-terminus, the 311-residue chain is MNPKRSFQALILTLHNYWADKGCAVLQPYDMEVGAGTFHPATTLRALGPKPWRAAYVQPSRRPTDGRYGENPNRLQHYYQYQVILKPNPSNLQELYLGSLEAIGLDPLLHDIRFVEDDWESPTLGAWGLGWECWCDGMEVSQFTYFQQVCGIECSPVSGELTYGLERLAMYVQGVDNVYDLNFNGREGAEKISYGDVFLQAEQEYSRHNFEYANTAMLHQHFIDAEKECLALLAAGAPGDSSNNRLHKCVFPAYDQCIKASHVFNLLDARGVISVTERQSYILRVRTLAKACGEAFLLTEAGGANWNREAA.

It belongs to the class-II aminoacyl-tRNA synthetase family. In terms of assembly, tetramer of two alpha and two beta subunits.

It localises to the cytoplasm. It carries out the reaction tRNA(Gly) + glycine + ATP = glycyl-tRNA(Gly) + AMP + diphosphate. This chain is Glycine--tRNA ligase alpha subunit, found in Rhizobium meliloti (strain 1021) (Ensifer meliloti).